A 542-amino-acid polypeptide reads, in one-letter code: TNF receptor-associated factor 6 (542 aa).

Residues 1-374 are interaction with TAX1BP1; that stretch reads MSLLHCENSC…EAQQCNGIYI (374 aa). The RING-type; degenerate zinc finger occupies 71–110; the sequence is CPICLMALREAVQTPCGHRFCKACIIKSIRDAGHKCPVDN. Residue K125 forms a Glycyl lysine isopeptide (Lys-Gly) (interchain with G-Cter in SUMO); alternate linkage. K125 participates in a covalent cross-link: Glycyl lysine isopeptide (Lys-Gly) (interchain with G-Cter in ubiquitin); alternate. Residue K143 forms a Glycyl lysine isopeptide (Lys-Gly) (interchain with G-Cter in SUMO) linkage. TRAF-type zinc fingers lie at residues 151–203 and 204–260; these read EHQA…EDKE and IHEQ…NHLA. Positions 310 to 368 form a coiled coil; it reads SEVHNFQETIQQLEGRLVRQDHQIRELTAKMETQSMYVNELKRTIRTLEDKVAEIEAQQ. K339 participates in a covalent cross-link: Glycyl lysine isopeptide (Lys-Gly) (interchain with G-Cter in ubiquitin). In terms of domain architecture, MATH spans 370–519; the sequence is NGIYIWKIGN…DDTLLVRCEV (150 aa). The interaction with TANK stretch occupies residues 375 to 542; that stretch reads WKIGNFGMHL…FQPRSTDSGI (168 aa). A Glycyl lysine isopeptide (Lys-Gly) (interchain with G-Cter in SUMO) cross-link involves residue K473.

The protein belongs to the TNF receptor-associated factor family. A subfamily. Homotrimer. Homooligomer. N-terminal region is dimeric while C-terminal region is trimeric; maybe providing a mode of oligomerization. Upon IL1B treatment, forms a complex with PELI1, IRAK1, IRAK4 and MYD88; this complex recruits MAP3K7/TAK1, TAB1 and TAB2 to mediate NF-kappa-B activation. Direct binding of SMAD6 to PELI1 prevents the complex formation and hence negatively regulates IL1R-TLR signaling and eventually NF-kappa-B-mediated gene expression. Binds to TNFRSF5/CD40 and TNFRSF11A/RANK. Associates with NGFR, TNFRSF17, IRAK2, IRAK3, RIPK2, MAP3K1, MAP3K5, MAP3K14, CSK, TRAF, TRAF-interacting protein TRIP and TNF receptor associated protein TDP2. Interacts with IL17R. Interacts with SQSTM1 bridging NTRK1 and NGFR. Forms a ternary complex with SQSTM1 and PRKCZ. Interacts with PELI2 and PELI3. Binds UBE2V1. Interacts with TAX1BP1; this interaction mediates deubiquitination of TRAF6 and inhibition of NF-kappa-B activation. Interacts with ZNF675. Interacts with ARRB1 and ARRB2. Interacts with MAP3K7 and TAB1/MAP3K7IP1; during IL-1 signaling. Interacts with UBE2N. Interacts with TGFBR1, HDAC1 and RANGAP1. Interacts with AKT1, AKT2 and AKT3. Interacts (via TRAF domains) with NUMBL (via C-terminal). Interacts with RBCK1. Interacts with LIMD1 (via LIM domains). Interacts with RSAD2/viperin. Interacts (via C-terminus) with EIF2AK2/PKR (via the kinase catalytic domain). Interacts with ZFAND5. Interacts with IL1RL1. Interacts with TRAFD1. Interacts with AJUBA. Interacts with MAVS/IPS1. Interacts (via TRAF domains) with DYNC2I2 (via WD domains). Interacts with IFIT3 (via N-terminus). Interacts with TICAM2. Interacts with CARD14. Interacts with CD40 and MAP3K8; the interaction is required for ERK activation. Interacts with TICAM1 and this interaction is enhanced in the presence of WDFY1. Interacts with TANK; this interaction increases in response to DNA damage. Interacts with USP10; this interaction increases in response to DNA damage. Interacts with ZC3H12A; this interaction increases in response to DNA damage and is stimulated by TANK. Interacts with WDFY3. Interacts with TRIM13. Interacts with GPS2. Interacts (via C-terminus) with SASH1. Interacts with LRRC19. Interacts with IL17RA and TRAF3IP2. Interacts with TOMM70. Interacts with AMBRA1; interaction is required to mediate 'Lys-63'-linked ubiquitination of ULK1. Interacts with CRBN; this interaction inhibits TLR4-mediated signaling by preventing TRAF6-mediated ubiquitination of ECSIT. In terms of processing, sumoylated on Lys-125, Lys-143 and Lys-473 with SUMO1. Post-translationally, polyubiquitinated on Lys-125 by TRAF3IP2; after cell stimulation with IL17A. Polyubiquitinated on Lys-125; after cell stimulation with IL1B or TGFB. This ligand-induced cell stimulation leads to dimerization/oligomerization of TRAF6 molecules, followed by auto-ubiquitination which involves UBE2N and UBE2V1 and leads to TRAF6 activation. This 'Lys-63' site-specific poly-ubiquitination appears to be associated with the activation of signaling molecules. Endogenous autoubiquitination occurs only for the cytoplasmic form. Deubiquitinated by USP10 in a TANK-dependent manner, leading to the negative regulation of NF-kappa-B signaling upon DNA damage. LRRC19 induces 'Lys-63' ubiquitination. Ubiquitinated at Lys-339 by the SCF(FBXL2) complex, leading to its degradation by the proteasome.

The protein resides in the cytoplasm. Its subcellular location is the cell cortex. It localises to the nucleus. The protein localises to the lipid droplet. The catalysed reaction is S-ubiquitinyl-[E2 ubiquitin-conjugating enzyme]-L-cysteine + [acceptor protein]-L-lysine = [E2 ubiquitin-conjugating enzyme]-L-cysteine + N(6)-ubiquitinyl-[acceptor protein]-L-lysine.. Its pathway is protein modification; protein ubiquitination. In terms of biological role, E3 ubiquitin ligase that, together with UBE2N and UBE2V1, mediates the synthesis of 'Lys-63'-linked-polyubiquitin chains conjugated to proteins, such as ECSIT, IKBKG, IRAK1, AKT1 and AKT2. Also mediates ubiquitination of free/unanchored polyubiquitin chain that leads to MAP3K7 activation. Leads to the activation of NF-kappa-B and JUN. Seems to also play a role in dendritic cells (DCs) maturation and/or activation. Represses c-Myb-mediated transactivation, in B-lymphocytes. Adapter protein that seems to play a role in signal transduction initiated via TNF receptor, IL-1 receptor and IL-17 receptor. Regulates osteoclast differentiation by mediating the activation of adapter protein complex 1 (AP-1) and NF-kappa-B, in response to RANK-L stimulation. Together with MAP3K8, mediates CD40 signals that activate ERK in B-cells and macrophages, and thus may play a role in the regulation of immunoglobulin production. Acts as a regulator of the JNK and NF-kappa-B signaling pathways by initiating assembly of heterotypic 'Lys-63'-/'Lys-48'-linked branched ubiquitin chains that are then recognized by TAB2: TRAF6 catalyzes initial 'Lys-63'-linked-polyubiquitin chains that are then branched via 'Lys-48'-linked polyubiquitin by HUWE1. 'Lys-63'-/'Lys-48'-linked branched ubiquitin chains protect 'Lys-63'-linkages from CYLD deubiquitination. Also participates in the TCR signaling by ubiquitinating LAT. The polypeptide is TNF receptor-associated factor 6 (TRAF6) (Bos taurus (Bovine)).